The following is a 381-amino-acid chain: Guanine nucleotide-binding protein G(olf) subunit alpha (381 aa).

A disordered region spans residues 1 to 25 (MGCLGGNSKTTEDQGVDEKERREAN). G2 carries the N-palmitoyl glycine lipid modification. The S-palmitoyl cysteine moiety is linked to residue C3. Residues 10 to 25 (TTEDQGVDEKERREAN) are compositionally biased toward basic and acidic residues. The G-alpha domain maps to 41–381 (ATHRLLLLGA…RMHLKQYELL (341 aa)). Residues 44–57 (RLLLLGAGESGKST) are G1 motif. Residues E52, S53, G54, K55, S56, and T57 each contribute to the GTP site. S56 provides a ligand contact to Mg(2+). Phosphothreonine is present on T178. The segment at 183-191 (DLLRCRVLT) is G2 motif. GTP is bound by residues L185 and R186. Residue R188 is modified to ADP-ribosylarginine; by cholera toxin. Residue T191 coordinates GTP. Residues T191 and D210 each contribute to the Mg(2+) site. Residues 206 to 215 (FHMFDVGGQR) form a G3 motif region. Residues G213, N279, K280, D282, and A353 each contribute to the GTP site. The tract at residues 275 to 282 (ILFLNKQD) is G4 motif. Residues 351–356 (TCAVDT) form a G5 motif region.

The protein belongs to the G-alpha family. G(s) subfamily. As to quaternary structure, g proteins are composed of 3 units; alpha, beta and gamma. The alpha chain contains the guanine nucleotide binding site. Interacts with GAS2L2. Interacts (GDP-bound form) with RIC8B (via C-terminus); promoting GNAL folding and association with the plasma membrane. Detected in olfactory neuroepithelium, brain, testis, and to a lower extent in retina, lung alveoli, spleen. Trace amounts where seen in kidney, adrenal gland and liver. Found to be expressed in all the insulinomas examined.

It localises to the cell membrane. It catalyses the reaction GTP + H2O = GDP + phosphate + H(+). In terms of biological role, guanine nucleotide-binding protein (G protein) involved as transducer in olfactory signal transduction controlled by G protein-coupled receptors (GPCRs). Contains the guanine nucleotide binding site and alternates between an active, GTP-bound state and an inactive, GDP-bound state. Signaling by an activated GPCR promotes GDP release and GTP binding. The alpha subunit has a low GTPase activity that converts bound GTP to GDP, thereby terminating the signal. Both GDP release and GTP hydrolysis are modulated by numerous regulatory proteins. GNAL/G(olf) alpha specifically mediates olfactory signal transduction within the olfactory neuroepithelium and the basal ganglia following GPCRs activation. Acts by promoting the specific activation of adenylyl cyclase ADCY3, resulting in increased levels of the signaling molecule cAMP. In Homo sapiens (Human), this protein is Guanine nucleotide-binding protein G(olf) subunit alpha.